Reading from the N-terminus, the 331-residue chain is N-arachidonyl glycine receptor (331 aa).

Residues 1–26 (MATLSNHNQLDLSNGSHPEEYKIAAL) are Extracellular-facing. N14 is a glycosylation site (N-linked (GlcNAc...) asparagine). Residues 27–47 (VFYSCIFLIGLFVNVTALWVF) form a helical membrane-spanning segment. Topologically, residues 48-56 (SCTTKKRTT) are cytoplasmic. Residues 57–77 (VTIYMMNVALLDLVFILSLPF) traverse the membrane as a helical segment. Residues 78-95 (RMFYYAKGEWPFGEYFCH) lie on the Extracellular side of the membrane. The cysteines at positions 94 and 172 are disulfide-linked. Residues 96 to 116 (ILGALVVFYPSLALWLLAFIS) traverse the membrane as a helical segment. Over 117–138 (ADRYMAIVQPKYAKELKNTGKA) the chain is Cytoplasmic. A helical membrane pass occupies residues 139 to 159 (VLACGGVWVMTLTTTVPLLLL). Residues 160–191 (YEDPDKASSPATCLKISDITHLKAVNVLNFTR) are Extracellular-facing. An N-linked (GlcNAc...) asparagine glycan is attached at N188. A helical membrane pass occupies residues 192-212 (LIFFFLIPLFIMIGCYVVIIH). Topologically, residues 213 to 236 (SLLRGQTSKLKPKVKEKSIRIIMT) are cytoplasmic. A helical membrane pass occupies residues 237–257 (LLLQVLVCFVPFHICFAVLML). Residues 258 to 268 (QGQENSYSPWG) lie on the Extracellular side of the membrane. A helical transmembrane segment spans residues 269-289 (AFTTFLMNLSTCLDVVLYYIV). At 290-331 (SKQFQARVISVMLYRNYLRSVRRKSVRSGSLRSLSNMNSEML) the chain is on the cytoplasmic side. At S322 the chain carries Phosphoserine.

It belongs to the G-protein coupled receptor 1 family. As to expression, expressed in the eye including cornea, retina, iris and ciliary epithelium (at protein level). Expressed in spleen, liver and lymphocytes with highest expression levels in intestinal intraepithelial lymphocytes.

The protein localises to the cell membrane. The protein resides in the cytoplasmic vesicle membrane. Its function is as follows. G protein-coupled receptor (GPCR) that plays a role in diverse physiological processes particularly within the immune and nervous systems. Becomes active when triggered by various endogenous ligands including endocannabinoid N-arachidonyl glycine (NAGly), delta-9-tetrahydrocannabinol or resolvin D2/RvD2 derived from the omega-3 fatty acid docosahexaenoic acid (DHA). Upon RvD2 binding, facilitates the resolution of inflammation, aiding in tissue repair and homeostasis. Mechanistically, RvD2 ligation initiates Galphas protein coupling, activation of cAMP-PKA signaling pathway and phosphorylation of STAT3, leading to RvD2-stimulated macrophage phagocytosis. Mediates NAGly-induced process of reorganization of actin filaments and induction of acrosomal exocytosis. Activation by N-arachidonoyl glycine (NAGly) can also induce apoptosis in macrophages. Plays a role in homeostasis of CD8+ subsets of intraepithelial lymphocytes (IELs) (CD8alphaalpha and CD8alphabeta IELs) in small intestine by supporting preferential migration of CD8alphaalpha T-cells to intraepithelial compartment over lamina propria compartment, and by mediating their reconstitution into small intestine after bone marrow transplant. Also participates in hypotensive responses, mediating reduction in intraocular and blood pressure. This Mus musculus (Mouse) protein is N-arachidonyl glycine receptor.